Consider the following 162-residue polypeptide: 6,7-dimethyl-8-ribityllumazine synthase (162 aa).

Residues Phe-22, 56–58, and 80–82 contribute to the 5-amino-6-(D-ribitylamino)uracil site; these read TFE and AVI. 85-86 contributes to the (2S)-2-hydroxy-3-oxobutyl phosphate binding site; the sequence is GT. The active-site Proton donor is His-88. 5-amino-6-(D-ribitylamino)uracil is bound at residue Met-113. Residue Arg-127 coordinates (2S)-2-hydroxy-3-oxobutyl phosphate.

It belongs to the DMRL synthase family.

It catalyses the reaction (2S)-2-hydroxy-3-oxobutyl phosphate + 5-amino-6-(D-ribitylamino)uracil = 6,7-dimethyl-8-(1-D-ribityl)lumazine + phosphate + 2 H2O + H(+). It functions in the pathway cofactor biosynthesis; riboflavin biosynthesis; riboflavin from 2-hydroxy-3-oxobutyl phosphate and 5-amino-6-(D-ribitylamino)uracil: step 1/2. Functionally, catalyzes the formation of 6,7-dimethyl-8-ribityllumazine by condensation of 5-amino-6-(D-ribitylamino)uracil with 3,4-dihydroxy-2-butanone 4-phosphate. This is the penultimate step in the biosynthesis of riboflavin. This chain is 6,7-dimethyl-8-ribityllumazine synthase, found in Anaeromyxobacter dehalogenans (strain 2CP-C).